The following is a 426-amino-acid chain: Trigger factor (426 aa).

The 84-residue stretch at 166–249 (GDIVTFDFKG…IIEVKARELP (84 aa)) folds into the PPIase FKBP-type domain.

Belongs to the FKBP-type PPIase family. Tig subfamily.

The protein localises to the cytoplasm. It carries out the reaction [protein]-peptidylproline (omega=180) = [protein]-peptidylproline (omega=0). Involved in protein export. Acts as a chaperone by maintaining the newly synthesized protein in an open conformation. Functions as a peptidyl-prolyl cis-trans isomerase. This is Trigger factor from Mesoplasma florum (strain ATCC 33453 / NBRC 100688 / NCTC 11704 / L1) (Acholeplasma florum).